The chain runs to 751 residues: Putative tyrosine-protein kinase EpsB (751 aa).

At 1–31 the chain is on the cytoplasmic side; it reads MTQNLSQPPAVNAPESELDLVRYLDVLVANR. The helical transmembrane segment at 32 to 52 threads the bilayer; it reads WLIAGIAAVVMLLGATYAFLA. Topologically, residues 53–444 are periplasmic; it reads RPVYEADVLV…VPEEPVKPKK (392 aa). A helical transmembrane segment spans residues 445–465; the sequence is LTVTALAGVLGVVLGVVAAFV. Residues 466 to 751 are Cytoplasmic-facing; that stretch reads RNTLFGGITE…PSAEAEAESA (286 aa).

It belongs to the etk/wzc family.

It is found in the cell inner membrane. The enzyme catalyses L-tyrosyl-[protein] + ATP = O-phospho-L-tyrosyl-[protein] + ADP + H(+). Functionally, probably involved in polymerization and/or export of exopolysaccharide EPS I which functions as a virulence factor. May be involved in an ATP-dependent process in the pathway for EPS I production, possibly export of the trimeric repeat units across the inner membrane or their polymerization. In Ralstonia nicotianae (strain ATCC BAA-1114 / GMI1000) (Ralstonia solanacearum), this protein is Putative tyrosine-protein kinase EpsB (epsB).